The following is a 414-amino-acid chain: Serine--tRNA ligase (414 aa).

Residue 230 to 232 participates in L-serine binding; it reads TAE. An ATP-binding site is contributed by 261–263; that stretch reads RKE. Position 284 (glutamate 284) interacts with L-serine. An ATP-binding site is contributed by 348–351; sequence EISS. Serine 382 serves as a coordination point for L-serine.

This sequence belongs to the class-II aminoacyl-tRNA synthetase family. Type-1 seryl-tRNA synthetase subfamily. As to quaternary structure, homodimer. The tRNA molecule binds across the dimer.

Its subcellular location is the cytoplasm. The enzyme catalyses tRNA(Ser) + L-serine + ATP = L-seryl-tRNA(Ser) + AMP + diphosphate + H(+). It catalyses the reaction tRNA(Sec) + L-serine + ATP = L-seryl-tRNA(Sec) + AMP + diphosphate + H(+). Its pathway is aminoacyl-tRNA biosynthesis; selenocysteinyl-tRNA(Sec) biosynthesis; L-seryl-tRNA(Sec) from L-serine and tRNA(Sec): step 1/1. Functionally, catalyzes the attachment of serine to tRNA(Ser). Is also able to aminoacylate tRNA(Sec) with serine, to form the misacylated tRNA L-seryl-tRNA(Sec), which will be further converted into selenocysteinyl-tRNA(Sec). This Sulfurovum sp. (strain NBC37-1) protein is Serine--tRNA ligase.